A 324-amino-acid polypeptide reads, in one-letter code: Putative HTH-type transcriptional regulatory protein UNCMA_15260 (324 aa).

Positions leucine 132–isoleucine 189 constitute an HTH cro/C1-type domain. The segment at residues leucine 143–serine 162 is a DNA-binding region (H-T-H motif).

This is Putative HTH-type transcriptional regulatory protein UNCMA_15260 from Methanocella arvoryzae (strain DSM 22066 / NBRC 105507 / MRE50).